The chain runs to 86 residues: Small ribosomal subunit protein bS18 (86 aa).

It belongs to the bacterial ribosomal protein bS18 family. As to quaternary structure, part of the 30S ribosomal subunit. Forms a tight heterodimer with protein bS6.

In terms of biological role, binds as a heterodimer with protein bS6 to the central domain of the 16S rRNA, where it helps stabilize the platform of the 30S subunit. In Herpetosiphon aurantiacus (strain ATCC 23779 / DSM 785 / 114-95), this protein is Small ribosomal subunit protein bS18.